A 651-amino-acid chain; its full sequence is DNA endonuclease RBBP8 (651 aa).

2 coiled-coil regions span residues 35 to 84 (LQEL…EDRL) and 117 to 138 (ISEL…SLEL). 3 disordered regions span residues 138-199 (LERL…PESR), 363-433 (NGRL…EHQA), and 487-539 (YESC…SDKS). The span at 363–379 (NGRLQSKNQETSEIETT) shows a compositional bias: polar residues. The segment covering 380–391 (QDSKKKCLDGHT) has biased composition (basic and acidic residues). The span at 503-515 (VYEEEREEDDPEE) shows a compositional bias: acidic residues. Residues 525 to 539 (RPADRKPLVSDSDKS) are compositionally biased toward basic and acidic residues. 2 positions are modified to phosphothreonine: T599 and T611.

The protein belongs to the COM1/SAE2/CtIP family. As to quaternary structure, homotetramer; formed by antiparallel association of helical extensions protruding from the N-termini of two parallel coiled-coil dimers. Interacts with the MRN complex; the interaction links DNA sensing to resection. Interacts with samhd1. Post-translationally, phosphorylation at Thr-599 and Thr-611 promote interaction with nbn and recruitment to double-strand breaks (DSBs).

Its subcellular location is the nucleus. It localises to the chromosome. In terms of biological role, endonuclease that cooperates with the MRE11-RAD50-NBN (MRN) complex in DNA-end resection, the first step of double-strand break (DSB) repair through the homologous recombination (HR) pathway. Functions downstream of the MRN complex and ATM, promotes ATR activation and its recruitment to DSBs in the S/G2 phase facilitating the generation of ssDNA. Specifically promotes the endonuclease activity of the MRN complex to clear DNA ends containing protein adducts: recruited to DSBs by nbn following phosphorylation, and promotes the endonuclease of mre11 to clear protein-DNA adducts and generate clean double-strand break ends. This Danio rerio (Zebrafish) protein is DNA endonuclease RBBP8 (rbbp8).